The sequence spans 294 residues: Nucleotide-binding protein Smal_0950 (294 aa).

16-23 (GLSGSGKS) serves as a coordination point for ATP. 69-72 (DVRG) contacts GTP.

This sequence belongs to the RapZ-like family.

In terms of biological role, displays ATPase and GTPase activities. This is Nucleotide-binding protein Smal_0950 from Stenotrophomonas maltophilia (strain R551-3).